A 236-amino-acid chain; its full sequence is Large ribosomal subunit protein uL2 (236 aa).

Over residues 1 to 10 the composition is skewed to polar residues; sequence MGHRITTQSR. 2 disordered regions span residues 1–20 and 202–236; these read MGHRITTQSRGHGGPTYRAP and GGGGHQHAGRPKTVSRGTSPGRKVGHIAARRTGRR. The segment covering 224–236 has biased composition (basic residues); sequence KVGHIAARRTGRR.

This sequence belongs to the universal ribosomal protein uL2 family. As to quaternary structure, part of the 50S ribosomal subunit. Forms a bridge to the 30S subunit in the 70S ribosome.

In terms of biological role, one of the primary rRNA binding proteins. Required for association of the 30S and 50S subunits to form the 70S ribosome, for tRNA binding and peptide bond formation. It has been suggested to have peptidyltransferase activity; this is somewhat controversial. Makes several contacts with the 16S rRNA in the 70S ribosome. The sequence is that of Large ribosomal subunit protein uL2 from Methanospirillum hungatei JF-1 (strain ATCC 27890 / DSM 864 / NBRC 100397 / JF-1).